The sequence spans 215 residues: Protein GET1 (215 aa).

The Lumenal segment spans residues 1-4; it reads MINL. The helical transmembrane segment at 5–24 threads the bilayer; sequence ALVIFLCTLLNQIVSWVGKS. The Cytoplasmic portion of the chain corresponds to 25–108; it reads VLQEIAFTAY…SFSKKFSTLL (84 aa). Residues 73-94 adopt a coiled-coil conformation; that stretch reads AKLRRKLDKGLADLEKTNNTLS. The chain crosses the membrane as a helical span at residues 109 to 129; sequence WLMTTGAQFLLSWWFRKQPIF. Topologically, residues 130-153 are lumenal; it reads WLPEGWVPYPVAWLLSFPSAPIGS. Residues 154–170 traverse the membrane as a helical segment; sequence VSSGAWGAICRRVLSTL. Residues 171–215 are Cytoplasmic-facing; sequence QEIIQSVLAPSPAATGPVPTGPSSAKNDQPEAKIEALALEHEKLD. The segment at 181 to 202 is disordered; the sequence is SPAATGPVPTGPSSAKNDQPEA.

Belongs to the WRB/GET1 family. In terms of assembly, interacts with GET3.

The protein resides in the endoplasmic reticulum membrane. In terms of biological role, required for the post-translational delivery of tail-anchored (TA) proteins to the endoplasmic reticulum. Acts as a membrane receptor for soluble GET3, which recognizes and selectively binds the transmembrane domain of TA proteins in the cytosol. This chain is Protein GET1, found in Cryptococcus neoformans var. neoformans serotype D (strain B-3501A) (Filobasidiella neoformans).